Here is a 138-residue protein sequence, read N- to C-terminus: Large ribosomal subunit protein uL16 (138 aa).

Over residues 1–13 (MLQPARRKYRKEQ) the composition is skewed to basic residues. Residues 1-20 (MLQPARRKYRKEQKGRNTGV) are disordered.

It belongs to the universal ribosomal protein uL16 family. In terms of assembly, part of the 50S ribosomal subunit.

In terms of biological role, binds 23S rRNA and is also seen to make contacts with the A and possibly P site tRNAs. The chain is Large ribosomal subunit protein uL16 from Verminephrobacter eiseniae (strain EF01-2).